Consider the following 294-residue polypeptide: Homeobox-leucine zipper protein ATHB-13 (294 aa).

A DNA-binding region (homeobox) is located at residues 82–141; sequence MGEKKRRLNMEQVKTLEKNFELGNKLEPERKMQLARALGLQPRQIAIWFQNRRARWKTKQ. Residues 142–177 are leucine-zipper; sequence LEKDYDTLKRQFDTLKAENDLLQTHNQKLQAEIMGL. The tract at residues 181 to 246 is disordered; it reads EQTESINLNK…FFPPSPATAT (66 aa). Low complexity predominate over residues 197–210; the sequence is SNRSDNSSDNLRLD. The span at 214-223 shows a compositional bias: polar residues; the sequence is APPSNDSTLT.

Belongs to the HD-ZIP homeobox family. Class I subfamily. As to expression, predominantly expressed in leaves and flowers.

The protein resides in the nucleus. Probable transcription factor that may act in the sucrose-signaling pathway. This Arabidopsis thaliana (Mouse-ear cress) protein is Homeobox-leucine zipper protein ATHB-13 (ATHB-13).